A 634-amino-acid chain; its full sequence is Putative ABC transporter ATP-binding protein MG015 homolog (634 aa).

6 helical membrane-spanning segments follow: residues 54–74 (VLYV…NSIL), 111–131 (LTIV…FNVA), 189–209 (VGGQ…ILFV), 213–233 (VIAL…FLFL), 296–316 (VFIY…SISI), and 325–345 (IPSF…IAAL). In terms of domain architecture, ABC transmembrane type-1 spans 54–364 (VLYVMVCAIF…IFSLWNLIQL (311 aa)). The ABC transporter domain occupies 397-631 (IRFEKVVFGY…NGFYARLKRS (235 aa)). 430-437 (GPTGAGKS) is a binding site for ATP.

This sequence belongs to the ABC transporter superfamily.

The protein resides in the cell membrane. This chain is Putative ABC transporter ATP-binding protein MG015 homolog, found in Mycoplasma pneumoniae (strain ATCC 29342 / M129 / Subtype 1) (Mycoplasmoides pneumoniae).